A 158-amino-acid polypeptide reads, in one-letter code: NAD(P)H-quinone oxidoreductase subunit J, chloroplastic (158 aa).

This sequence belongs to the complex I 30 kDa subunit family. As to quaternary structure, NDH is composed of at least 16 different subunits, 5 of which are encoded in the nucleus.

The protein resides in the plastid. It is found in the chloroplast thylakoid membrane. The catalysed reaction is a plastoquinone + NADH + (n+1) H(+)(in) = a plastoquinol + NAD(+) + n H(+)(out). It carries out the reaction a plastoquinone + NADPH + (n+1) H(+)(in) = a plastoquinol + NADP(+) + n H(+)(out). Functionally, NDH shuttles electrons from NAD(P)H:plastoquinone, via FMN and iron-sulfur (Fe-S) centers, to quinones in the photosynthetic chain and possibly in a chloroplast respiratory chain. The immediate electron acceptor for the enzyme in this species is believed to be plastoquinone. Couples the redox reaction to proton translocation, and thus conserves the redox energy in a proton gradient. This chain is NAD(P)H-quinone oxidoreductase subunit J, chloroplastic, found in Arabis hirsuta (Hairy rock-cress).